The primary structure comprises 146 residues: Hemoglobin subunit beta (146 aa).

Residue Val1 is modified to N-acetylvaline. One can recognise a Globin domain in the interval 2–146 (HLTGEEKSAV…VANALAHKYH (145 aa)). Thr12 is subject to Phosphothreonine. Ser44 is subject to Phosphoserine. Position 59 is an N6-acetyllysine (Lys59). Position 63 (His63) interacts with heme b. At Lys82 the chain carries N6-acetyllysine. Position 92 (His92) interacts with heme b. S-nitrosocysteine is present on Cys93. At Lys144 the chain carries N6-acetyllysine.

Belongs to the globin family. Heterotetramer of two alpha chains and two beta chains. In terms of tissue distribution, red blood cells.

Its function is as follows. Involved in oxygen transport from the lung to the various peripheral tissues. This is Hemoglobin subunit beta (HBB) from Nycticebus coucang (Slow loris).